A 334-amino-acid polypeptide reads, in one-letter code: D-alanine--D-alanine ligase (334 aa).

In terms of domain architecture, ATP-grasp spans 121–327; the sequence is KLWYDALDIP…FSEFLVQCVT (207 aa). ATP is bound at residue 151-206; sequence AFGHWGSIFVKAARQGSSVGCYKVTTEDQIAPAIEAAFGFSEQVLVEQAVKPRELE. Mg(2+) is bound by residues Asp281, Glu294, and Asn296.

Belongs to the D-alanine--D-alanine ligase family. Mg(2+) serves as cofactor. It depends on Mn(2+) as a cofactor.

The protein localises to the cytoplasm. It catalyses the reaction 2 D-alanine + ATP = D-alanyl-D-alanine + ADP + phosphate + H(+). The protein operates within cell wall biogenesis; peptidoglycan biosynthesis. Functionally, cell wall formation. The sequence is that of D-alanine--D-alanine ligase from Vibrio cholerae serotype O1 (strain ATCC 39315 / El Tor Inaba N16961).